Consider the following 171-residue polypeptide: Large ribosomal subunit protein uL10 (171 aa).

Belongs to the universal ribosomal protein uL10 family. As to quaternary structure, part of the ribosomal stalk of the 50S ribosomal subunit. The N-terminus interacts with L11 and the large rRNA to form the base of the stalk. The C-terminus forms an elongated spine to which L12 dimers bind in a sequential fashion forming a multimeric L10(L12)X complex.

Forms part of the ribosomal stalk, playing a central role in the interaction of the ribosome with GTP-bound translation factors. In Corynebacterium diphtheriae (strain ATCC 700971 / NCTC 13129 / Biotype gravis), this protein is Large ribosomal subunit protein uL10.